We begin with the raw amino-acid sequence, 248 residues long: UPF0736 protein BCAH187_A1335 (248 aa).

It belongs to the UPF0736 family.

This Bacillus cereus (strain AH187) protein is UPF0736 protein BCAH187_A1335.